We begin with the raw amino-acid sequence, 216 residues long: Octanoyltransferase (216 aa).

Positions 30 to 204 (KNNINEIWLL…NCKKFLMMNN (175 aa)) constitute a BPL/LPL catalytic domain. Substrate-binding positions include 68 to 75 (RGGHMTFH), 135 to 137 (SIG), and 148 to 150 (GLA). Residue C166 is the Acyl-thioester intermediate of the active site.

It belongs to the LipB family.

Its subcellular location is the cytoplasm. It catalyses the reaction octanoyl-[ACP] + L-lysyl-[protein] = N(6)-octanoyl-L-lysyl-[protein] + holo-[ACP] + H(+). The protein operates within protein modification; protein lipoylation via endogenous pathway; protein N(6)-(lipoyl)lysine from octanoyl-[acyl-carrier-protein]: step 1/2. Its function is as follows. Catalyzes the transfer of endogenously produced octanoic acid from octanoyl-acyl-carrier-protein onto the lipoyl domains of lipoate-dependent enzymes. Lipoyl-ACP can also act as a substrate although octanoyl-ACP is likely to be the physiological substrate. This is Octanoyltransferase from Wigglesworthia glossinidia brevipalpis.